Reading from the N-terminus, the 467-residue chain is MDTKHFLPLDFSTQVNSSSLSSPTGRGSMAAPSLHPSLGPGLGSPLGSPGQLHSPISTLSSPINGMGPPFSVISSPMGPHSMSVPTTPTLGFETGSPQLNSPMNPVSSSEDIKPPLGLNGVLKVPAHPSGNMSSFTKHICAICGDRSSGKHYGVYSCEGCKGFFKRTVRKDLTYTCRDNKDCLIDKRQRNRCQYCRYQKCLAMGMKREAVQEERQRGKDRNENEVESTSSANEDMPVEKILEAELAVEPKTETYVEANMGLNPSSPNDPVTNICQAADKQLFTLVEWAKRIPHFSELPLDDQVILLRAGWNELLIASFSHRSIAVKDGILLATGLHVHRNSAHSAGVGAIFDRVLTELVSKMRDMQMDKTELGCLRAIVLFNPDSKGLSNPAEVEALREKVYASLEAYCKHKYPEQPGRFAKLLLRLPALRSIGLKCLEHLFFFKLIGDTPIDTFLMEMLEAPHQTT.

The segment at 1 to 61 (MDTKHFLPLD…LHSPISTLSS (61 aa)) is disordered. Residues 1–139 (MDTKHFLPLD…GNMSSFTKHI (139 aa)) are modulating. A Glycyl lysine isopeptide (Lys-Gly) (interchain with G-Cter in SUMO2) cross-link involves residue Lys-4. 2 positions are modified to phosphoserine: Ser-22 and Ser-28. Over residues 32–55 (PSLHPSLGPGLGSPLGSPGQLHSP) the composition is skewed to low complexity. A phosphoserine; by MAPK8 and MAPK9 mark is found at Ser-61 and Ser-75. The interval 79-109 (PHSMSVPTTPTLGFETGSPQLNSPMNPVSSS) is disordered. A compositionally biased stretch (polar residues) spans 83–109 (SVPTTPTLGFETGSPQLNSPMNPVSSS). Position 87 is a phosphothreonine; by MAPK8 and MAPK9 (Thr-87). Lys-113 is covalently cross-linked (Glycyl lysine isopeptide (Lys-Gly) (interchain with G-Cter in SUMO)). Phosphoserine is present on Ser-134. The Zn(2+) site is built by Cys-140 and Cys-143. The segment at 140 to 160 (CAICGDRSSGKHYGVYSCEGC) adopts an NR C4-type zinc-finger fold. A DNA-binding region (nuclear receptor) is located at residues 140-205 (CAICGDRSSG…RYQKCLAMGM (66 aa)). Residue Lys-150 is modified to N6-acetyllysine. Residues Cys-157 and Cys-160 each contribute to the Zn(2+) site. Residues 165–170 (KRTVRK) form a nuclear localization signal region. The Zn(2+) site is built by Cys-176, Cys-182, Cys-192, and Cys-195. Residues 176–200 (CRDNKDCLIDKRQRNRCQYCRYQKC) form an NR C4-type zinc finger. A hinge region spans residues 206–229 (KREAVQEERQRGKDRNENEVESTS). Residues 211-223 (QEERQRGKDRNEN) are compositionally biased toward basic and acidic residues. Positions 211-233 (QEERQRGKDRNENEVESTSSANE) are disordered. The NR LBD domain occupies 232-463 (NEDMPVEKIL…TFLMEMLEAP (232 aa)). The residue at position 264 (Ser-264) is a Phosphoserine. Residue Ser-265 is modified to Phosphoserine; by MAPK8 and MAPK9. 9-cis-retinoate is bound by residues Arg-321 and Ala-332. Positions 321 and 332 each coordinate all-trans-retinoate. Residues 353–373 (RVLTELVSKMRDMQMDKTELG) are required for nuclear export.

This sequence belongs to the nuclear hormone receptor family. NR2 subfamily. In terms of assembly, homodimer. Heterodimer (via C-terminus) with RARA; required for ligand-dependent retinoic acid receptor transcriptional activity; association with RARA is enhanced by pulsatile shear stress. Heterodimer with PPARA (via the leucine-like zipper in the LBD); the interaction is required for PPARA transcriptional activity. Heterodimerizes with PPARG. Heterodimerizes (via NR LBD) with RARB. Heterodimerizes with NR1H4; the heterodimerization enhances the binding affinity for LXXLL motifs from coactivators. Interacts with NCOA3 and NCOA6 coactivators. Interacts with FAM120B. Interacts with coactivator PELP1, SENP6, SFPQ, DNTTIP2 and RNF8. Interacts with PRMT2. Interacts with ASXL1. Interacts with BHLHE40/DEC1, BHLHE41/DEC2, MED1, NCOR1 and NCOR2. Interacts in a ligand-dependent fashion with MED1 and NCOA1. Interacts with VDR. Interacts with EP300; the interaction is decreased by 9-cis retinoic acid. Heterodimer (via C-terminus) with NR4A1 (DNA-binding domain); the interaction is enhanced by 9-cis retinoic acid. NR4A1 competes with EP300 for interaction with RXRA and thereby attenuates EP300 mediated acetylation of RXRA. In the absence of hormonal ligand, interacts with TACC1. Interacts ith IGFBP3. In terms of processing, phosphorylated on serine and threonine residues mainly in the N-terminal modulating domain. Constitutively phosphorylated on Ser-22 in the presence or absence of ligand. Under stress conditions, hyperphosphorylated by activated JNK on Ser-61, Ser-75, Thr-87 and Ser-265. Phosphorylated on Ser-28, in vitro, by PKA. This phosphorylation is required for repression of cAMP-mediated transcriptional activity of RARA. Post-translationally, ubiquitinated by UBR5, leading to its degradation: UBR5 specifically recognizes and binds ligand-bound RXRA when it is not associated with coactivators (NCOAs). In presence of NCOAs, the UBR5-degron is not accessible, preventing its ubiquitination and degradation. Sumoylation negatively regulates transcriptional activity. Desumoylated specifically by SENP6. In terms of processing, acetylated by EP300; acetylation enhances DNA binding and transcriptional activity. As to expression, expressed in the adrenal gland with main expression in the zona fasciculata and medulla (at protein level). Expressed in aortic endothelial cells, with high expression in the descending thoracic aorta and the outer curvature of the aortic arch, where pulsatory shear stress exists, but very low in the inner curvature of the aortic arch, where oscillatory shear stress prevails (at protein level).

It localises to the nucleus. It is found in the cytoplasm. Its subcellular location is the mitochondrion. Its function is as follows. Receptor for retinoic acid that acts as a transcription factor. Forms homo- or heterodimers with retinoic acid receptors (RARs) and binds to target response elements in response to their ligands, all-trans or 9-cis retinoic acid, to regulate gene expression in various biological processes. The RAR/RXR heterodimers bind to the retinoic acid response elements (RARE) composed of tandem 5'-AGGTCA-3' sites known as DR1-DR5 to regulate transcription. The high affinity ligand for retinoid X receptors (RXRs) is 9-cis retinoic acid. In the absence of ligand, the RXR-RAR heterodimers associate with a multiprotein complex containing transcription corepressors that induce histone deacetylation, chromatin condensation and transcriptional suppression. On ligand binding, the corepressors dissociate from the receptors and coactivators are recruited leading to transcriptional activation. Serves as a common heterodimeric partner for a number of nuclear receptors, such as RARA, RARB and PPARA. The RXRA/RARB heterodimer can act as a transcriptional repressor or transcriptional activator, depending on the RARE DNA element context. The RXRA/PPARA heterodimer is required for PPARA transcriptional activity on fatty acid oxidation genes such as ACOX1 and the P450 system genes. Together with RARA, positively regulates microRNA-10a expression, thereby inhibiting the GATA6/VCAM1 signaling response to pulsatile shear stress in vascular endothelial cells. Acts as an enhancer of RARA binding to RARE DNA element. May facilitate the nuclear import of heterodimerization partners such as VDR and NR4A1. Promotes myelin debris phagocytosis and remyelination by macrophages. Plays a role in the attenuation of the innate immune system in response to viral infections, possibly by negatively regulating the transcription of antiviral genes such as type I IFN genes. Involved in the regulation of calcium signaling by repressing ITPR2 gene expression, thereby controlling cellular senescence. This chain is Retinoic acid receptor RXR-alpha (Rxra), found in Rattus norvegicus (Rat).